A 375-amino-acid chain; its full sequence is Chaperone protein DnaJ (375 aa).

Residues 5 to 70 (DYYEILGISK…EKRAAYDQYG (66 aa)) form the J domain. The CR-type zinc finger occupies 130 to 208 (GIIKEICIPT…CHGNGRVERS (79 aa)). Zn(2+) contacts are provided by Cys-143, Cys-146, Cys-160, Cys-163, Cys-182, Cys-185, Cys-196, and Cys-199. 4 CXXCXGXG motif repeats span residues 143 to 150 (CEKCRGTG), 160 to 167 (CMTCHGQG), 182 to 189 (CPTCHGHG), and 196 to 203 (CNKCHGNG).

It belongs to the DnaJ family. Homodimer. Zn(2+) is required as a cofactor.

The protein resides in the cytoplasm. Its function is as follows. Participates actively in the response to hyperosmotic and heat shock by preventing the aggregation of stress-denatured proteins and by disaggregating proteins, also in an autonomous, DnaK-independent fashion. Unfolded proteins bind initially to DnaJ; upon interaction with the DnaJ-bound protein, DnaK hydrolyzes its bound ATP, resulting in the formation of a stable complex. GrpE releases ADP from DnaK; ATP binding to DnaK triggers the release of the substrate protein, thus completing the reaction cycle. Several rounds of ATP-dependent interactions between DnaJ, DnaK and GrpE are required for fully efficient folding. Also involved, together with DnaK and GrpE, in the DNA replication of plasmids through activation of initiation proteins. This is Chaperone protein DnaJ from Blochmanniella pennsylvanica (strain BPEN).